Here is a 166-residue protein sequence, read N- to C-terminus: Transcription elongation factor GreA (166 aa).

Belongs to the GreA/GreB family.

Functionally, necessary for efficient RNA polymerase transcription elongation past template-encoded arresting sites. The arresting sites in DNA have the property of trapping a certain fraction of elongating RNA polymerases that pass through, resulting in locked ternary complexes. Cleavage of the nascent transcript by cleavage factors such as GreA or GreB allows the resumption of elongation from the new 3'terminus. GreA releases sequences of 2 to 3 nucleotides. This Anaeromyxobacter sp. (strain K) protein is Transcription elongation factor GreA.